A 1254-amino-acid polypeptide reads, in one-letter code: NPC intracellular cholesterol transporter 1 homolog 1b (1254 aa).

Residues 1 to 16 (MKVIFATIWLIAGAWS) form the signal peptide. The Extracellular segment spans residues 17-272 (QSAEQLGCIW…WKIAGLYGVT (256 aa)). 8 cysteine pairs are disulfide-bonded: Cys24–Cys81, Cys62–Cys116, Cys82–Cys120, Cys104–Cys241, Cys107–Cys161, Cys178–Cys186, Cys231–Cys246, and Cys243–Cys250. N-linked (GlcNAc...) asparagine glycans are attached at residues Asn123 and Asn132. The chain crosses the membrane as a helical span at residues 273–293 (FILALIIACALSFFIFWGAFG). Residues 294–325 (KTSAPSVCMPTLFGEFFYHGFRIWGTFCAKHP) lie on the Cytoplasmic side of the membrane. Residues 326 to 346 (VIVLALCSWAIAGLSFGIRYM) form a helical membrane-spanning segment. The Extracellular portion of the chain corresponds to 347 to 593 (TITTDPVELW…AIVELSEGEV (247 aa)). N-linked (GlcNAc...) asparagine glycosylation occurs at Asn389. Residues Cys438 and Cys454 are joined by a disulfide bond. The N-linked (GlcNAc...) asparagine glycan is linked to Asn479. The cysteines at positions 491 and 500 are disulfide-linked. Residues 592–757 (EVSTVVISYV…ITAFVALMAI (166 aa)) enclose the SSD domain. The helical transmembrane segment at 594-614 (STVVISYVVMFVYVAIALGHI) threads the bilayer. Topologically, residues 615 to 625 (RSCRGFLRESR) are cytoplasmic. A helical transmembrane segment spans residues 626–646 (IMLAIGGIVIVLASVVCSLGF). Residues 647–657 (WGYLDVTTTML) are Extracellular-facing. Residues 658-678 (AIEVIPFLVLAVGVDNIFIMV) traverse the membrane as a helical segment. Residues 679–736 (HTYQRLDHSKFKTTHEAIGEAIGQVGPSILQTAGSEMACFAIGCISDMPAVKTFAMYA) are Cytoplasmic-facing. A helical transmembrane segment spans residues 737–757 (AIAILLDFLLQITAFVALMAI). Residues 758 to 815 (DEKRYLDGRLDMLCCVKSGGKKINDEDGDGVDRPKEVGLLETLFKNFYSPFLLSKPVK) are Extracellular-facing. Residues 816–836 (VSVLLIFTVITCLSLMVTPSI) traverse the membrane as a helical segment. Residues 837-857 (EKGLDQEMSMPKNSHVVKYFR) are Cytoplasmic-facing. A helical transmembrane segment spans residues 858 to 878 (YMVDLLAMGAPVYWVLKPGLN). The Extracellular portion of the chain corresponds to 879–1079 (YSEPLQQNLI…EQYLTIWGDA (201 aa)). A disulfide bond links Cys889 and Cys894. N-linked (GlcNAc...) asparagine glycans are attached at residues Asn896 and Asn939. 3 disulfide bridges follow: Cys935/Cys990, Cys936/Cys958, and Cys946/Cys955. A helical transmembrane segment spans residues 1080 to 1100 (MFSLGMSLVAIFLVTLLITGL). The Cytoplasmic portion of the chain corresponds to 1101 to 1105 (DITST). Residues 1106–1126 (FIVLFMVICILINMLGMMWAW) traverse the membrane as a helical segment. At 1127–1132 (SINLNA) the chain is on the extracellular side. The helical transmembrane segment at 1133–1153 (ISLVNLVVCVGIGVEFVAHIV) threads the bilayer. At 1154–1174 (RSFKRAEGTAQERARHSLNVT) the chain is on the cytoplasmic side. Residues 1175-1195 (GSSVLSGITLTKFAGIVVLGF) traverse the membrane as a helical segment. The Extracellular portion of the chain corresponds to 1196–1207 (SNSQIFQVFYFR). The helical transmembrane segment at 1208 to 1228 (MYLGIVLIGAAHGLILLPVLL) threads the bilayer. Residues 1229–1254 (SLLGPPQKLARSSGAEPTASITITTN) lie on the Cytoplasmic side of the membrane.

It belongs to the patched family. Expressed in the midgut.

It localises to the cell membrane. It carries out the reaction cholesterol(in) = cholesterol(out). Its function is as follows. Important for cholesterol absorption at the midgut epithelium. Acts only in the early steps of sterol absorption, prior to Npc1a-dependent intracellular sterol trafficking. This chain is NPC intracellular cholesterol transporter 1 homolog 1b, found in Drosophila melanogaster (Fruit fly).